Reading from the N-terminus, the 427-residue chain is Serine--tRNA ligase (427 aa).

Thr231–Glu233 contributes to the L-serine binding site. Arg262–Glu264 provides a ligand contact to ATP. Glu285 is an L-serine binding site. Position 349–352 (Glu349–Ser352) interacts with ATP. Position 385 (Ser385) interacts with L-serine.

The protein belongs to the class-II aminoacyl-tRNA synthetase family. Type-1 seryl-tRNA synthetase subfamily. Homodimer. The tRNA molecule binds across the dimer.

It is found in the cytoplasm. It catalyses the reaction tRNA(Ser) + L-serine + ATP = L-seryl-tRNA(Ser) + AMP + diphosphate + H(+). The catalysed reaction is tRNA(Sec) + L-serine + ATP = L-seryl-tRNA(Sec) + AMP + diphosphate + H(+). It participates in aminoacyl-tRNA biosynthesis; selenocysteinyl-tRNA(Sec) biosynthesis; L-seryl-tRNA(Sec) from L-serine and tRNA(Sec): step 1/1. Functionally, catalyzes the attachment of serine to tRNA(Ser). Is also able to aminoacylate tRNA(Sec) with serine, to form the misacylated tRNA L-seryl-tRNA(Sec), which will be further converted into selenocysteinyl-tRNA(Sec). This chain is Serine--tRNA ligase, found in Sinorhizobium medicae (strain WSM419) (Ensifer medicae).